We begin with the raw amino-acid sequence, 346 residues long: MAISKLIPTLVLFVLFSFDVSVAHPGLGFGWGSNSPIGGSFYSNLYPQFYQFSCPQADEIVMTVLEKAIAKEPRMAASLLRLHFHDCFVQGCDASILLDDSATIRSEKNAGPNKNSVRGFQVIDEIKAKLEQACPQTVSCADILALAARGSTILSGGPSWELPLGRRDSRTASLNGANTNIPAPNSTIQNLLTMFQRKGLNEEDLVSLSGGHTIGVARCTTFKQRLYNQNGNNQPDETLERSYYYGLRSICPPTGGDNNISPLDLASPARFDNTYFKLLLWGKGLLTSDEVLLTGNVGKTGALVKAYAEDERLFFQQFAKSMVNMGNIQPLTGFNGEIRKSCHVIN.

A signal peptide spans Met-1 to Ala-23. 4 cysteine pairs are disulfide-bonded: Cys-54–Cys-134, Cys-87–Cys-92, Cys-140–Cys-342, and Cys-219–Cys-251. His-85 (proton acceptor) is an active-site residue. Residues Asp-86, Val-89, Gly-91, Asp-93, and Ser-95 each coordinate Ca(2+). Residue Pro-182 participates in substrate binding. Asn-185 carries N-linked (GlcNAc...) asparagine glycosylation. His-212 is a binding site for heme b. A Ca(2+)-binding site is contributed by Thr-213. 3 residues coordinate Ca(2+): Asp-264, Ser-267, and Asp-272.

This sequence belongs to the peroxidase family. Classical plant (class III) peroxidase subfamily. Requires heme b as cofactor. Ca(2+) serves as cofactor.

It is found in the secreted. The enzyme catalyses 2 a phenolic donor + H2O2 = 2 a phenolic radical donor + 2 H2O. Removal of H(2)O(2), oxidation of toxic reductants, biosynthesis and degradation of lignin, suberization, auxin catabolism, response to environmental stresses such as wounding, pathogen attack and oxidative stress. These functions might be dependent on each isozyme/isoform in each plant tissue. This is Peroxidase 9 (PER9) from Arabidopsis thaliana (Mouse-ear cress).